The chain runs to 224 residues: BOS complex subunit TMEM147 (224 aa).

The chain crosses the membrane as a helical span at residues Met1 to Tyr21. Over Lys22–Lys34 the chain is Cytoplasmic. The chain crosses the membrane as a helical span at residues Cys35–Pro58. Over Thr59–Asp66 the chain is Lumenal. A helical transmembrane segment spans residues Phe67–Met88. Over Ser89–Lys98 the chain is Cytoplasmic. Residues Ile99–Arg124 traverse the membrane as a helical segment. Topologically, residues Gly125 to Asp129 are lumenal. A helical transmembrane segment spans residues Trp130 to Met155. Residues Ile156–Thr164 are Cytoplasmic-facing. The helical transmembrane segment at Phe165 to Val187 threads the bilayer. Residues His188 to Ser194 are Lumenal-facing. Residues Trp195 to Tyr216 form a helical membrane-spanning segment. The Cytoplasmic segment spans residues Val217–Ser224.

This sequence belongs to the TMEM147 family. As to quaternary structure, component of the back of Sec61 (BOS) complex, composed of NCLN/Nicalin, NOMO (NOMO1, NOMO2 or NOMO3) and TMEM147. The BOS complex is part of the multi-pass translocon (MPT) complex, composed of three subcomplexes, the GEL complex (composed of RAB5IF/OPTI and TMCO1), the BOS complex (composed of NCLN/Nicalin, NOMO and TMEM147) and the PAT complex (composed of WDR83OS/Asterix and CCDC47). The MPT complex associates with the SEC61 complex. Interacts with CHRM3, CHRM1 and AVPR2. Interacts with LBR; promoting LBR localization to the nucleus inner membrane. Interacts with DHCR7.

It localises to the endoplasmic reticulum membrane. The protein localises to the nucleus membrane. The protein resides in the cell membrane. Its function is as follows. Component of the multi-pass translocon (MPT) complex that mediates insertion of multi-pass membrane proteins into the lipid bilayer of membranes. The MPT complex takes over after the SEC61 complex: following membrane insertion of the first few transmembrane segments of proteins by the SEC61 complex, the MPT complex occludes the lateral gate of the SEC61 complex to promote insertion of subsequent transmembrane regions. Also acts as a negative regulator of CHRM3 function, most likely by interfering with its trafficking to the cell membrane. Negatively regulates CHRM3-mediated calcium mobilization and activation of RPS6KA1/p90RSK activity. Regulates LBR localization to the nucleus inner membrane. This is BOS complex subunit TMEM147 from Homo sapiens (Human).